The chain runs to 229 residues: Orotate phosphoribosyltransferase (229 aa).

5-phospho-alpha-D-ribose 1-diphosphate is bound by residues Arg-107, Lys-108, Lys-111, His-113, and 133–141 (EDLTTAGGS). Residue Thr-137 coordinates orotate.

Belongs to the purine/pyrimidine phosphoribosyltransferase family. PyrE subfamily. Homodimer. Mg(2+) is required as a cofactor.

It catalyses the reaction orotidine 5'-phosphate + diphosphate = orotate + 5-phospho-alpha-D-ribose 1-diphosphate. Its pathway is pyrimidine metabolism; UMP biosynthesis via de novo pathway; UMP from orotate: step 1/2. In terms of biological role, catalyzes the transfer of a ribosyl phosphate group from 5-phosphoribose 1-diphosphate to orotate, leading to the formation of orotidine monophosphate (OMP). In Rhizobium etli (strain ATCC 51251 / DSM 11541 / JCM 21823 / NBRC 15573 / CFN 42), this protein is Orotate phosphoribosyltransferase.